A 242-amino-acid chain; its full sequence is Glucosamine-6-phosphate deaminase (242 aa).

D67 acts as the Proton acceptor; for enolization step in catalysis. N136 functions as the For ring-opening step in the catalytic mechanism. H138 (proton acceptor; for ring-opening step) is an active-site residue. E143 serves as the catalytic For ring-opening step.

The protein belongs to the glucosamine/galactosamine-6-phosphate isomerase family. NagB subfamily.

It carries out the reaction alpha-D-glucosamine 6-phosphate + H2O = beta-D-fructose 6-phosphate + NH4(+). It functions in the pathway amino-sugar metabolism; N-acetylneuraminate degradation; D-fructose 6-phosphate from N-acetylneuraminate: step 5/5. In terms of biological role, catalyzes the reversible isomerization-deamination of glucosamine 6-phosphate (GlcN6P) to form fructose 6-phosphate (Fru6P) and ammonium ion. The polypeptide is Glucosamine-6-phosphate deaminase (Alkaliphilus metalliredigens (strain QYMF)).